A 290-amino-acid polypeptide reads, in one-letter code: Xyloglucan endotransglycosylase/hydrolase protein 8 (290 aa).

Positions 1–25 are cleaved as a signal peptide; it reads MAKHLALSVAAAVAVSWLAASSAAA. In terms of domain architecture, GH16 spans 26–218; the sequence is AGFYEKFDVV…WSGAPFVVSY (193 aa). Glutamate 106 acts as the Nucleophile in catalysis. Catalysis depends on glutamate 110, which acts as the Proton donor. Glutamate 110 provides a ligand contact to xyloglucan. Asparagine 114 carries N-linked (GlcNAc...) asparagine glycosylation. Xyloglucan-binding positions include 123 to 125, 133 to 135, and 197 to 198; these read NTN, KKE, and YW. Intrachain disulfides connect cysteine 226–cysteine 240 and cysteine 273–cysteine 287. Arginine 278 serves as a coordination point for xyloglucan.

Belongs to the glycosyl hydrolase 16 family. XTH group 2 subfamily. In terms of processing, contains at least one intrachain disulfide bond essential for its enzymatic activity. As to expression, transcript strongly detected in leaf sheaths. Weakly or not expressed in leaf blades, roots and calli. Accumulation of transcript detected in shoot apex meristem, vascular tissues, young leaves, vascular bundles of leaf sheaths, and peripheral cylinder of the vascular bundles and fibers in the nodal region.

It localises to the secreted. It is found in the cell wall. The protein resides in the extracellular space. Its subcellular location is the apoplast. The catalysed reaction is breaks a beta-(1-&gt;4) bond in the backbone of a xyloglucan and transfers the xyloglucanyl segment on to O-4 of the non-reducing terminal glucose residue of an acceptor, which can be a xyloglucan or an oligosaccharide of xyloglucan.. In terms of biological role, catalyzes xyloglucan endohydrolysis (XEH) and/or endotransglycosylation (XET). Cleaves and religates xyloglucan polymers, an essential constituent of the primary cell wall, and thereby participates in cell wall construction of growing tissues. May promote elongation of three internodes (II, III and IV) and may be involved in cell elongation processes. The sequence is that of Xyloglucan endotransglycosylase/hydrolase protein 8 (XTH8) from Oryza sativa subsp. japonica (Rice).